Here is a 605-residue protein sequence, read N- to C-terminus: LysM domain receptor-like kinase 10 (605 aa).

The signal sequence occupies residues Met1–Ala20. Residues Ala21–Ala245 lie on the Extracellular side of the membrane. 3 disulfide bridges follow: Cys26–Cys89, Cys30–Cys161, and Cys87–Cys159. N-linked (GlcNAc...) asparagine glycosylation is present at Asn44. Chitin is bound by residues Gly115–Ala121 and Pro142–Gly148. N-linked (GlcNAc...) asparagine glycans are attached at residues Asn154 and Asn158. One can recognise a LysM domain in the interval Leu174–Pro221. Asn226 is a glycosylation site (N-linked (GlcNAc...) asparagine). Residues Ile246–Met266 form a helical membrane-spanning segment. Topologically, residues Phe267 to Phe605 are cytoplasmic. The residue at position 278 (Ser278) is a Phosphoserine. One can recognise a Protein kinase domain in the interval Phe317–Leu591. ATP is bound by residues Ile323–Val331 and Lys344. Asp436 (proton acceptor) is an active-site residue.

Belongs to the protein kinase superfamily. Ser/Thr protein kinase family.

Its subcellular location is the cell membrane. The enzyme catalyses L-seryl-[protein] + ATP = O-phospho-L-seryl-[protein] + ADP + H(+). It carries out the reaction L-threonyl-[protein] + ATP = O-phospho-L-threonyl-[protein] + ADP + H(+). The sequence is that of LysM domain receptor-like kinase 10 from Oryza sativa subsp. japonica (Rice).